The chain runs to 366 residues: Mannonate dehydratase (366 aa).

It belongs to the mannonate dehydratase family. Requires Fe(2+) as cofactor. Mn(2+) serves as cofactor.

It catalyses the reaction D-mannonate = 2-dehydro-3-deoxy-D-gluconate + H2O. The protein operates within carbohydrate metabolism; pentose and glucuronate interconversion. Catalyzes the dehydration of D-mannonate. The chain is Mannonate dehydratase from Streptococcus suis (strain 98HAH33).